The chain runs to 585 residues: MSKVAKQYAGAQVYGRLLSYLKPLWKVFALAVLGNVIYALASAAMADATKYIVAAIETPSPEGRLLVPMLIIGIFALRGLGSFCGGYFMARVARGIVHRMRLELFRHLTVLPCRFFDSNSTGHLVSRITYNVDQVTGAATNAITVVLREGFTVIGLMGYMIYVSWKLTLLFLVLGPIIGVLIGYVSKRFRRISRRIQSSMGDVTHVASESIGGYRVMRTFGGEEYEFNRFMKASEYNITQALKMSLTQALSTPIIQLVISVFIALLVWLALSPEVRGNMSTGEFLAYITAATTCAKPIRQLTEVNAVIQRGISAAQDVFMQLDEPVEKDEGSYVADRVQGRLEFKSLGFAYSDEGKPALQEINLVIEPGETVALVGRSGSGKSTLVNLLPRFYDYEQGEILLDGKPLKDFALTSLRRQISIVTQQVVLFNDTVTNNIAYGALADATPEQVREAAKSADALGFIEQLEQGFDTLLGENGTRLSGGQRQRMVIARALLKDSPILILDEATSALDTHAERNIQSALETLMKGRTTLVVAHRLSTIENADKIVVMDQGRIVEVGSHRELIEKDGAYAALHKLQFSEADA.

Helical transmembrane passes span 24-44, 65-85, 143-163, 165-185, and 253-273; these read LWKV…ASAA, LLVP…SFCG, ITVV…MIYV, WKLT…IGYV, and PIIQ…ALSP. The region spanning 29–310 is the ABC transmembrane type-1 domain; that stretch reads ALAVLGNVIY…LTEVNAVIQR (282 aa). Positions 342–578 constitute an ABC transporter domain; it reads LEFKSLGFAY…DGAYAALHKL (237 aa). 376–383 is a binding site for ATP; sequence GRSGSGKS.

The protein belongs to the ABC transporter superfamily. Lipid exporter (TC 3.A.1.106) family. In terms of assembly, homodimer.

It localises to the cell inner membrane. The enzyme catalyses ATP + H2O + lipid A-core oligosaccharideSide 1 = ADP + phosphate + lipid A-core oligosaccharideSide 2.. Involved in lipopolysaccharide (LPS) biosynthesis. Translocates lipid A-core from the inner to the outer leaflet of the inner membrane. Transmembrane domains (TMD) form a pore in the inner membrane and the ATP-binding domain (NBD) is responsible for energy generation. This Hahella chejuensis (strain KCTC 2396) protein is ATP-dependent lipid A-core flippase.